A 508-amino-acid polypeptide reads, in one-letter code: Photosystem II CP47 reaction center protein (508 aa).

6 helical membrane-spanning segments follow: residues 21 to 36 (AVHI…WAGS), 101 to 115 (IVFS…IWHW), 140 to 156 (GIHL…FGAF), 203 to 218 (IAAG…FHLS), 237 to 252 (VLSS…AFVV), and 457 to 472 (SFAL…HGSR).

The protein belongs to the PsbB/PsbC family. PsbB subfamily. PSII is composed of 1 copy each of membrane proteins PsbA, PsbB, PsbC, PsbD, PsbE, PsbF, PsbH, PsbI, PsbJ, PsbK, PsbL, PsbM, PsbT, PsbX, PsbY, PsbZ, Psb30/Ycf12, at least 3 peripheral proteins of the oxygen-evolving complex and a large number of cofactors. It forms dimeric complexes. It depends on Binds multiple chlorophylls. PSII binds additional chlorophylls, carotenoids and specific lipids. as a cofactor.

Its subcellular location is the plastid. The protein localises to the chloroplast thylakoid membrane. In terms of biological role, one of the components of the core complex of photosystem II (PSII). It binds chlorophyll and helps catalyze the primary light-induced photochemical processes of PSII. PSII is a light-driven water:plastoquinone oxidoreductase, using light energy to abstract electrons from H(2)O, generating O(2) and a proton gradient subsequently used for ATP formation. The chain is Photosystem II CP47 reaction center protein from Lotus japonicus (Lotus corniculatus var. japonicus).